The following is a 165-amino-acid chain: CDP-archaeol synthase (165 aa).

A run of 4 helical transmembrane segments spans residues 41-61 (GLIC…WLVG), 72-92 (ILSV…KSFI), 103-123 (AWPV…TIIF), and 127-147 (WFFA…TPVL).

This sequence belongs to the CDP-archaeol synthase family. Requires Mg(2+) as cofactor.

It localises to the cell membrane. The enzyme catalyses 2,3-bis-O-(geranylgeranyl)-sn-glycerol 1-phosphate + CTP + H(+) = CDP-2,3-bis-O-(geranylgeranyl)-sn-glycerol + diphosphate. It participates in membrane lipid metabolism; glycerophospholipid metabolism. Functionally, catalyzes the formation of CDP-2,3-bis-(O-geranylgeranyl)-sn-glycerol (CDP-archaeol) from 2,3-bis-(O-geranylgeranyl)-sn-glycerol 1-phosphate (DGGGP) and CTP. This reaction is the third ether-bond-formation step in the biosynthesis of archaeal membrane lipids. The sequence is that of CDP-archaeol synthase from Methanoregula boonei (strain DSM 21154 / JCM 14090 / 6A8).